The primary structure comprises 493 residues: Probable malate:quinone oxidoreductase (493 aa).

This sequence belongs to the MQO family. The cofactor is FAD.

It carries out the reaction (S)-malate + a quinone = a quinol + oxaloacetate. It participates in carbohydrate metabolism; tricarboxylic acid cycle; oxaloacetate from (S)-malate (quinone route): step 1/1. The protein is Probable malate:quinone oxidoreductase of Lysinibacillus sphaericus (strain C3-41).